Here is a 106-residue protein sequence, read N- to C-terminus: Integration host factor subunit alpha (106 aa).

This sequence belongs to the bacterial histone-like protein family. In terms of assembly, heterodimer of an alpha and a beta chain.

This protein is one of the two subunits of integration host factor, a specific DNA-binding protein that functions in genetic recombination as well as in transcriptional and translational control. This Methylobacterium radiotolerans (strain ATCC 27329 / DSM 1819 / JCM 2831 / NBRC 15690 / NCIMB 10815 / 0-1) protein is Integration host factor subunit alpha.